A 235-amino-acid polypeptide reads, in one-letter code: MVRGRQFLAARVYDTARAGMSSTIIQNTRPNVPMWLKALDHIPPAEVLTRPYPIQHTEPKDRGRAAQRPRNLFRPTKIVHPEDQLRQEFYRDHPWELARPKLVLELDGQDARRRDWSKGLRQPGMAVVQRQLWYMEVRGLSKARAYDVARKEFYKLRQQEEIERRVAVEEARMYGAYFGKNNLQVGMELEDAAYEQWKKWATIEISKLEAERTAAYANVVDTVTEPAEDDEEELL.

The tract at residues 51–71 (PYPIQHTEPKDRGRAAQRPRN) is disordered.

Belongs to the mitochondrion-specific ribosomal protein mS23 family. Component of the mitochondrial small ribosomal subunit.

The protein resides in the mitochondrion. The chain is Small ribosomal subunit protein mS23 (RSM25) from Chaetomium globosum (strain ATCC 6205 / CBS 148.51 / DSM 1962 / NBRC 6347 / NRRL 1970) (Soil fungus).